A 632-amino-acid polypeptide reads, in one-letter code: MQRVQPSAARVKSQKKEKAPPDVPDVILDGERKTRYEKGKFLGKGGFAHCYELRNKSTGELFAGKVVPKALLIKQYQRDKMAQEVQIHRNLQHRNVVKLYHFFEDKSNVYITLELCPRRSLMELHKRRKAVTEPEARYFTYQIVEGVLYLHNLKIVHRDLKLGNLFLNDELQVKIGDFGLATTCDNDERKKTLCGTPNYIAPEVLNKIGHSFEVDLWAIGCILYILLFGHPPFESKSLEETYSRIKNNNYVIPTSASAAASQLIRVLLDPVPSRRPNARAVCRDHFFKSGFMPARLPVSCLTMVPHLNDDEYAEENVSPSGTIDQRGPHQAGRSGLSAIPAHLVSRNSERQQTHRMEAYRQPTDCYLSNLLAQVNDLLATPTADIDDAEAALDSYQSPEALPVFWISKWVDYSDKYGIGYQLCDNSVGVLFNDNSRIMLDTAGTQLTYIEKTEKEHYFDMESAIPSGLQKKMTLLKYFRSYMNDHLLQAGQQVTRKVGDDLARLPTLRVWFRTKSAIVLHLSNGTVQINFFNDHIKMVLCPLMQAVTFIDENKRMFTYKFSHLAENGCPEKFLHRIQYAKCMIQRLVEEHTKEETKHNAPAANAVRLPSTSSNVRLESAADIQPAYPSSSRR.

The disordered stretch occupies residues 1–26 (MQRVQPSAARVKSQKKEKAPPDVPDV). The region spanning 36-287 (YEKGKFLGKG…ARAVCRDHFF (252 aa)) is the Protein kinase domain. ATP-binding positions include 42 to 50 (LGKGGFAHC) and lysine 65. Aspartate 159 acts as the Proton acceptor in catalysis. The tract at residues 313–334 (AEENVSPSGTIDQRGPHQAGRS) is disordered. POLO box domains are found at residues 405–484 (WISK…YMND) and 506–588 (TLRV…RLVE).

Belongs to the protein kinase superfamily. Ser/Thr protein kinase family. CDC5/Polo subfamily. Interacts (via POLO box domain) with mex-5 and mex-6. Interacts (via POLO box domain) with him-8 (via N-terminus); the interaction mediates plk-2 recruitment to the pairing region of X chromosomes during meiosis. Interacts with sun-1. May interact with nicotinic acetylcholine receptor. Mg(2+) serves as cofactor. In terms of tissue distribution, expressed in oocytes.

The protein resides in the nucleus. It is found in the cytoplasm. The protein localises to the cytoskeleton. It localises to the microtubule organizing center. Its subcellular location is the centrosome. The protein resides in the chromosome. It is found in the centromere. The protein localises to the kinetochore. It carries out the reaction L-seryl-[protein] + ATP = O-phospho-L-seryl-[protein] + ADP + H(+). The catalysed reaction is L-threonyl-[protein] + ATP = O-phospho-L-threonyl-[protein] + ADP + H(+). In terms of biological role, serine/threonine-protein kinase which plays a role, during oogenesis, in chromosome pairing and synapsis, by facilitating the recruitment and attachment of meiotic chromosomes to the nuclear envelope during prophase. Promotes the localization of brc-1 to the short arm of homologous chromosomes during meiotic prophase I. Regulates the formation of sun-1 patches along the nuclear envelope. Promotes meiotic nuclei apoptosis in response to chromosomal asynapsis. Plays a redundant role with plk-1 in the establishment of cell polarity downstream of mex-5 and mex-6 during the first embryonic cell divisions. Plays a role in nicotinic acetylcholine receptor-mediated sensitivity to nicotine but not levamisole. Regulates motility. The sequence is that of Serine/threonine-protein kinase plk-2 from Caenorhabditis elegans.